The following is a 462-amino-acid chain: A-type ATP synthase subunit B (462 aa).

This sequence belongs to the ATPase alpha/beta chains family. As to quaternary structure, has multiple subunits with at least A(3), B(3), C, D, E, F, H, I and proteolipid K(x).

It is found in the cell membrane. Functionally, component of the A-type ATP synthase that produces ATP from ADP in the presence of a proton gradient across the membrane. The B chain is a regulatory subunit. The protein is A-type ATP synthase subunit B of Pyrococcus abyssi (strain GE5 / Orsay).